The sequence spans 165 residues: Short form salivary protein D7R4 (165 aa).

The first 21 residues, 1–21 (MIRQVITSYFLTVCLLALVQG), serve as a signal peptide directing secretion. 3 cysteine pairs are disulfide-bonded: C27–C59, C40–C165, and C98–C117. The noradrenaline site is built by E28 and R43. E28 lines the serotonin pocket. Residues H56, Y115, D132, and E135 each coordinate serotonin. 3 residues coordinate histamine: Y115, D132, and E135. Residues Y115, D132, and E135 each contribute to the tryptamine site. Positions 132 and 135 each coordinate noradrenaline.

It belongs to the PBP/GOBP family. Female saliva (at protein level). Female salivary gland. Not detected in female carcass without salivary glands. Not detected in male tissues.

It is found in the secreted. Its function is as follows. Modulates blood feeding of female mosquitoes on vertebrate species by binding and sequestering different mediators involved in the host response. Binds serotonin, noradrenaline, histamine and tryptamine. Inhibits histamine-, serotonin- and partially noradrenaline-induced smooth muscle contraction. Exhibits vasodilating activity. The chain is Short form salivary protein D7R4 from Anopheles gambiae (African malaria mosquito).